Reading from the N-terminus, the 105-residue chain is Vacuolar ATPase assembly integral membrane protein VMA21 homolog (105 aa).

Residues methionine 1 to serine 26 form a disordered region. Over methionine 1–leucine 36 the chain is Cytoplasmic. Residues phenylalanine 37–valine 57 traverse the membrane as a helical segment. The Lumenal portion of the chain corresponds to leucine 58–lysine 68. Residues valine 69–isoleucine 89 traverse the membrane as a helical segment. The Cytoplasmic segment spans residues tyrosine 90–aspartate 105.

Belongs to the VMA21 family.

The protein resides in the endoplasmic reticulum membrane. It localises to the endoplasmic reticulum-Golgi intermediate compartment membrane. The protein localises to the cytoplasmic vesicle. It is found in the COPII-coated vesicle membrane. Functionally, required for the assembly of the V0 complex of the vacuolar ATPase (V-ATPase) in the endoplasmic reticulum. This Drosophila melanogaster (Fruit fly) protein is Vacuolar ATPase assembly integral membrane protein VMA21 homolog.